The chain runs to 364 residues: S-adenosylmethionine:tRNA ribosyltransferase-isomerase (364 aa).

This sequence belongs to the QueA family. Monomer.

It is found in the cytoplasm. The catalysed reaction is 7-aminomethyl-7-carbaguanosine(34) in tRNA + S-adenosyl-L-methionine = epoxyqueuosine(34) in tRNA + adenine + L-methionine + 2 H(+). It functions in the pathway tRNA modification; tRNA-queuosine biosynthesis. Its function is as follows. Transfers and isomerizes the ribose moiety from AdoMet to the 7-aminomethyl group of 7-deazaguanine (preQ1-tRNA) to give epoxyqueuosine (oQ-tRNA). This chain is S-adenosylmethionine:tRNA ribosyltransferase-isomerase, found in Bradyrhizobium sp. (strain BTAi1 / ATCC BAA-1182).